Reading from the N-terminus, the 1464-residue chain is Bridge-like lipid transfer protein family member 3B (1464 aa).

The region spanning 3–94 (GIIKKQILKH…DKVIMEMSTC (92 aa)) is the Chorein N-terminal domain. Disordered regions lie at residues 267–297 (STEQ…TQTS) and 409–436 (DHNV…YPLK). The segment covering 278 to 297 (PTQSSTVVASAQQVKTTQTS) has biased composition (polar residues). Phosphoserine is present on residues serine 414, serine 418, serine 774, serine 935, and serine 1009. Disordered stretches follow at residues 1066–1089 (SKEE…PKER), 1164–1183 (LQNY…EGAQ), and 1392–1413 (QRSV…QSAN). Composition is skewed to polar residues over residues 1164–1182 (LQNY…SEGA) and 1394–1413 (SVTQ…QSAN). Residues 1418-1456 (SFDFTREQLMEENESLKQELAKAKMALAEAHLEKDALLH) adopt a coiled-coil conformation.

In terms of assembly, monomer. Homodimer (via N-terminus). Associates with the Golgi-associated retrograde protein (GARP) complex. Interacts with GARP complex component VPS52. Interacts (via C-terminal coiled-coil domain) with STX6.

Its subcellular location is the cytoplasm. The protein localises to the cytosol. It localises to the early endosome. Functionally, tube-forming lipid transport protein which mediates the transfer of lipids between membranes at organelle contact sites. Required for retrograde traffic of vesicle clusters in the early endocytic pathway to the Golgi complex. In Homo sapiens (Human), this protein is Bridge-like lipid transfer protein family member 3B.